Consider the following 275-residue polypeptide: Phosphate import ATP-binding protein PstB (275 aa).

Residues 29-270 (LEIKDLDLYY…PNKKKTEDYI (242 aa)) form the ABC transporter domain. Position 61–68 (61–68 (GPSGCGKS)) interacts with ATP.

It belongs to the ABC transporter superfamily. Phosphate importer (TC 3.A.1.7) family. As to quaternary structure, the complex is composed of two ATP-binding proteins (PstB), two transmembrane proteins (PstC and PstA) and a solute-binding protein (PstS).

It is found in the cell inner membrane. The catalysed reaction is phosphate(out) + ATP + H2O = ADP + 2 phosphate(in) + H(+). Functionally, part of the ABC transporter complex PstSACB involved in phosphate import. Responsible for energy coupling to the transport system. This is Phosphate import ATP-binding protein PstB from Pseudoalteromonas translucida (strain TAC 125).